Consider the following 146-residue polypeptide: Hemoglobin subunit beta (146 aa).

Residues 2-146 (FLTPEENGHV…VANALAHKYH (145 aa)) enclose the Globin domain. T12 is modified (phosphothreonine). At S44 the chain carries Phosphoserine. The residue at position 59 (K59) is an N6-acetyllysine. H63 is a binding site for heme b. K82 carries the post-translational modification N6-acetyllysine. H92 is a heme b binding site. C93 bears the S-nitrosocysteine mark. K144 bears the N6-acetyllysine mark.

It belongs to the globin family. In terms of assembly, heterotetramer of two alpha chains and two beta chains. As to expression, red blood cells.

Its function is as follows. Involved in oxygen transport from the lung to the various peripheral tissues. The sequence is that of Hemoglobin subunit beta (HBB) from Hapalemur griseus (Gray gentle lemur).